The primary structure comprises 405 residues: Arginine biosynthesis bifunctional protein ArgJ (405 aa).

Substrate-binding residues include Thr152, Lys178, Thr189, Glu276, Asn400, and Thr405. Residue Thr189 is the Nucleophile of the active site.

It belongs to the ArgJ family. As to quaternary structure, heterotetramer of two alpha and two beta chains.

The protein resides in the cytoplasm. The catalysed reaction is N(2)-acetyl-L-ornithine + L-glutamate = N-acetyl-L-glutamate + L-ornithine. It carries out the reaction L-glutamate + acetyl-CoA = N-acetyl-L-glutamate + CoA + H(+). It participates in amino-acid biosynthesis; L-arginine biosynthesis; L-ornithine and N-acetyl-L-glutamate from L-glutamate and N(2)-acetyl-L-ornithine (cyclic): step 1/1. It functions in the pathway amino-acid biosynthesis; L-arginine biosynthesis; N(2)-acetyl-L-ornithine from L-glutamate: step 1/4. Catalyzes two activities which are involved in the cyclic version of arginine biosynthesis: the synthesis of N-acetylglutamate from glutamate and acetyl-CoA as the acetyl donor, and of ornithine by transacetylation between N(2)-acetylornithine and glutamate. The sequence is that of Arginine biosynthesis bifunctional protein ArgJ from Pseudomonas fluorescens (strain Pf0-1).